A 115-amino-acid polypeptide reads, in one-letter code: Large ribosomal subunit protein bL19 (115 aa).

It belongs to the bacterial ribosomal protein bL19 family.

This protein is located at the 30S-50S ribosomal subunit interface and may play a role in the structure and function of the aminoacyl-tRNA binding site. This Koribacter versatilis (strain Ellin345) protein is Large ribosomal subunit protein bL19.